A 207-amino-acid chain; its full sequence is Ras-related protein Rab-8B (207 aa).

GTP contacts are provided by Ser17, Gly18, Val19, Gly20, Lys21, Thr22, Cys23, Thr35, Ser39, and Thr40. Thr22 lines the Mg(2+) pocket. 2 consecutive short sequence motifs (switch) follow at residues 31–45 and 63–80; these read DAFN…GIDF and DTAG…YYRG. Positions 40 and 63 each coordinate Mg(2+). A GTP-binding site is contributed by Gly66. Thr72 is modified (phosphothreonine). Residues Asn121, Lys122, Asp124, Ala152, and Lys153 each coordinate GTP. Phosphoserine occurs at positions 180 and 183. A Cysteine methyl ester modification is found at Cys204. The S-geranylgeranyl cysteine moiety is linked to residue Cys204. A propeptide spans 205–207 (removed in mature form); the sequence is LLL.

This sequence belongs to the small GTPase superfamily. Rab family. As to quaternary structure, associated with actin, delta-catenin and alpha and beta tubulins. Interacts with OTOF. Interacts with PEX5R. Interacts with RAB3IP. Interacts with VIM. Interacts with CDH1. Interacts with MICALL2. Interacts with GDI1, GDI2, CHML and CHM; phosphorylation at Thr-72 disrupts these interactions. Interacts with MICAL1. The cofactor is Mg(2+). In terms of processing, phosphorylation of Thr-72 in the switch II region by LRRK2 prevents the association of RAB regulatory proteins, including CHM, CHML and RAB GDP dissociation inhibitors GDI1 and GDI2.

It localises to the cell membrane. The protein localises to the cytoplasmic vesicle. It is found in the phagosome membrane. Its subcellular location is the endosome membrane. It carries out the reaction GTP + H2O = GDP + phosphate + H(+). Its activity is regulated as follows. Regulated by guanine nucleotide exchange factors (GEFs) including RAB3IP/RABIN8 which promotes the exchange of bound GDP for free GTP. Regulated by GTPase activating proteins (GAPs) which increase the GTP hydrolysis activity. Inhibited by GDP dissociation inhibitors (GDIs). In terms of biological role, the small GTPases Rab are key regulators of intracellular membrane trafficking, from the formation of transport vesicles to their fusion with membranes. Rabs cycle between an inactive GDP-bound form and an active GTP-bound form that is able to recruit to membranes different sets of downstream effectors directly responsible for vesicle formation, movement, tethering and fusion. RAB8B may be involved in polarized vesicular trafficking and neurotransmitter release. May participate in cell junction dynamics in Sertoli cells. May also participate in the export of a subset of neosynthesized proteins through a Rab8-Rab10-Rab11-dependent endososomal export route. The polypeptide is Ras-related protein Rab-8B (RAB8B) (Bos taurus (Bovine)).